Here is a 169-residue protein sequence, read N- to C-terminus: Benzoate 1,2-dioxygenase subunit beta (169 aa).

It belongs to the bacterial ring-hydroxylating dioxygenase beta subunit family. This dioxygenase system consists of three proteins: the two subunits of the hydroxylase (BenA and BenB), and an electron transfer component (BenC).

The enzyme catalyses benzoate + NADH + O2 + H(+) = (1R,6S)-1,6-dihydroxycyclohexa-2,4-diene-1-carboxylate + NAD(+). It functions in the pathway aromatic compound metabolism; benzoate degradation via hydroxylation; catechol from benzoate: step 1/2. In terms of biological role, degradation of benzoate to 2-hydro-1,2-dihydroxybenzoate (DHB). The beta subunit may be responsible for the substrate specificity of the enzyme. This chain is Benzoate 1,2-dioxygenase subunit beta (benB), found in Acinetobacter baylyi (strain ATCC 33305 / BD413 / ADP1).